A 145-amino-acid chain; its full sequence is Ribonuclease P protein component (145 aa).

Residues proline 119–leucine 145 are disordered.

It belongs to the RnpA family. As to quaternary structure, consists of a catalytic RNA component (M1 or rnpB) and a protein subunit.

It carries out the reaction Endonucleolytic cleavage of RNA, removing 5'-extranucleotides from tRNA precursor.. In terms of biological role, RNaseP catalyzes the removal of the 5'-leader sequence from pre-tRNA to produce the mature 5'-terminus. It can also cleave other RNA substrates such as 4.5S RNA. The protein component plays an auxiliary but essential role in vivo by binding to the 5'-leader sequence and broadening the substrate specificity of the ribozyme. This Xanthomonas euvesicatoria pv. vesicatoria (strain 85-10) (Xanthomonas campestris pv. vesicatoria) protein is Ribonuclease P protein component.